The following is a 234-amino-acid chain: Large ribosomal subunit protein uL1 (234 aa).

The protein belongs to the universal ribosomal protein uL1 family. As to quaternary structure, part of the 50S ribosomal subunit.

Functionally, binds directly to 23S rRNA. The L1 stalk is quite mobile in the ribosome, and is involved in E site tRNA release. Its function is as follows. Protein L1 is also a translational repressor protein, it controls the translation of the L11 operon by binding to its mRNA. The polypeptide is Large ribosomal subunit protein uL1 (Yersinia enterocolitica serotype O:8 / biotype 1B (strain NCTC 13174 / 8081)).